We begin with the raw amino-acid sequence, 182 residues long: Large ribosomal subunit protein uL16 (182 aa).

Residues 140-182 form a disordered region; the sequence is EKPTQVGKAPPKSSFLPSDETETAAAQAGTEASSASSVTPLES. The span at 162–176 shows a compositional bias: low complexity; that stretch reads TAAAQAGTEASSASS.

Belongs to the universal ribosomal protein uL16 family. Part of the 50S ribosomal subunit.

Functionally, binds 23S rRNA and is also seen to make contacts with the A and possibly P site tRNAs. The polypeptide is Large ribosomal subunit protein uL16 (Prochlorococcus marinus (strain SARG / CCMP1375 / SS120)).